We begin with the raw amino-acid sequence, 280 residues long: Bis(5'-nucleosyl)-tetraphosphatase, symmetrical (280 aa).

This sequence belongs to the Ap4A hydrolase family.

It catalyses the reaction P(1),P(4)-bis(5'-adenosyl) tetraphosphate + H2O = 2 ADP + 2 H(+). Its function is as follows. Hydrolyzes diadenosine 5',5'''-P1,P4-tetraphosphate to yield ADP. The sequence is that of Bis(5'-nucleosyl)-tetraphosphatase, symmetrical from Paracidovorax citrulli (strain AAC00-1) (Acidovorax citrulli).